Here is a 554-residue protein sequence, read N- to C-terminus: CTP synthase (554 aa).

Residues 1–265 (MTPLIFVTGG…DEIVIDQFKL (265 aa)) form an amidoligase domain region. Ser13 contributes to the CTP binding site. Ser13 lines the UTP pocket. ATP is bound by residues 14–19 (SLGKGI) and Asp71. 2 residues coordinate Mg(2+): Asp71 and Glu139. CTP-binding positions include 146–148 (DIE), 186–191 (KTKPTQ), and Lys222. Residues 186-191 (KTKPTQ) and Lys222 each bind UTP. The Glutamine amidotransferase type-1 domain occupies 292–545 (TIAVVGKYVD…VKASRARKAG (254 aa)). Position 353 (Gly353) interacts with L-glutamine. Cys380 serves as the catalytic Nucleophile; for glutamine hydrolysis. L-glutamine contacts are provided by residues 381-384 (YGMQ), Glu404, and Arg471. Active-site residues include His518 and Glu520.

This sequence belongs to the CTP synthase family. Homotetramer.

It carries out the reaction UTP + L-glutamine + ATP + H2O = CTP + L-glutamate + ADP + phosphate + 2 H(+). The catalysed reaction is L-glutamine + H2O = L-glutamate + NH4(+). It catalyses the reaction UTP + NH4(+) + ATP = CTP + ADP + phosphate + 2 H(+). Its pathway is pyrimidine metabolism; CTP biosynthesis via de novo pathway; CTP from UDP: step 2/2. With respect to regulation, allosterically activated by GTP, when glutamine is the substrate; GTP has no effect on the reaction when ammonia is the substrate. The allosteric effector GTP functions by stabilizing the protein conformation that binds the tetrahedral intermediate(s) formed during glutamine hydrolysis. Inhibited by the product CTP, via allosteric rather than competitive inhibition. Functionally, catalyzes the ATP-dependent amination of UTP to CTP with either L-glutamine or ammonia as the source of nitrogen. Regulates intracellular CTP levels through interactions with the four ribonucleotide triphosphates. This Xylella fastidiosa (strain M12) protein is CTP synthase.